Reading from the N-terminus, the 150-residue chain is Putative pre-16S rRNA nuclease (150 aa).

The protein belongs to the YqgF nuclease family.

The protein resides in the cytoplasm. Could be a nuclease involved in processing of the 5'-end of pre-16S rRNA. This chain is Putative pre-16S rRNA nuclease, found in Chlamydia abortus (strain DSM 27085 / S26/3) (Chlamydophila abortus).